A 231-amino-acid chain; its full sequence is Large ribosomal subunit protein uL1 (231 aa).

This sequence belongs to the universal ribosomal protein uL1 family. Part of the 50S ribosomal subunit.

In terms of biological role, binds directly to 23S rRNA. The L1 stalk is quite mobile in the ribosome, and is involved in E site tRNA release. Its function is as follows. Protein L1 is also a translational repressor protein, it controls the translation of the L11 operon by binding to its mRNA. The chain is Large ribosomal subunit protein uL1 from Allorhizobium ampelinum (strain ATCC BAA-846 / DSM 112012 / S4) (Agrobacterium vitis (strain S4)).